We begin with the raw amino-acid sequence, 326 residues long: Beta-ketoacyl-[acyl-carrier-protein] synthase III (326 aa).

Residues Cys-112 and His-251 contribute to the active site. Residues 252-256 are ACP-binding; the sequence is QANSR. Asn-281 is an active-site residue.

It belongs to the thiolase-like superfamily. FabH family. Homodimer.

It is found in the cytoplasm. The enzyme catalyses malonyl-[ACP] + acetyl-CoA + H(+) = 3-oxobutanoyl-[ACP] + CO2 + CoA. Its pathway is lipid metabolism; fatty acid biosynthesis. Its function is as follows. Catalyzes the condensation reaction of fatty acid synthesis by the addition to an acyl acceptor of two carbons from malonyl-ACP. Catalyzes the first condensation reaction which initiates fatty acid synthesis and may therefore play a role in governing the total rate of fatty acid production. Possesses both acetoacetyl-ACP synthase and acetyl transacylase activities. Its substrate specificity determines the biosynthesis of branched-chain and/or straight-chain of fatty acids. The chain is Beta-ketoacyl-[acyl-carrier-protein] synthase III from Clostridium botulinum (strain 657 / Type Ba4).